Consider the following 149-residue polypeptide: Arginine repressor (149 aa).

Belongs to the ArgR family.

The protein localises to the cytoplasm. Its pathway is amino-acid biosynthesis; L-arginine biosynthesis [regulation]. In terms of biological role, regulates arginine biosynthesis genes. This is Arginine repressor from Bacillus mycoides (strain KBAB4) (Bacillus weihenstephanensis).